Reading from the N-terminus, the 98-residue chain is Large ribosomal subunit protein bL21 (98 aa).

It belongs to the bacterial ribosomal protein bL21 family. Part of the 50S ribosomal subunit. Contacts protein L20.

In terms of biological role, this protein binds to 23S rRNA in the presence of protein L20. This Chloroherpeton thalassium (strain ATCC 35110 / GB-78) protein is Large ribosomal subunit protein bL21.